The chain runs to 346 residues: Dihydroorotase (346 aa).

Positions 14 and 16 each coordinate Zn(2+). Residues 16–18 (HLR) and Asn42 contribute to the substrate site. Zn(2+) is bound by residues Lys100, His137, and His175. Position 100 is an N6-carboxylysine (Lys100). His137 serves as a coordination point for substrate. Substrate is bound at residue Leu220. Asp248 lines the Zn(2+) pocket. Residue Asp248 is part of the active site. Substrate-binding residues include His252 and Ala264.

The protein belongs to the metallo-dependent hydrolases superfamily. DHOase family. Class II DHOase subfamily. As to quaternary structure, homodimer. Zn(2+) is required as a cofactor.

It carries out the reaction (S)-dihydroorotate + H2O = N-carbamoyl-L-aspartate + H(+). Its pathway is pyrimidine metabolism; UMP biosynthesis via de novo pathway; (S)-dihydroorotate from bicarbonate: step 3/3. In terms of biological role, catalyzes the reversible cyclization of carbamoyl aspartate to dihydroorotate. The protein is Dihydroorotase of Ruegeria pomeroyi (strain ATCC 700808 / DSM 15171 / DSS-3) (Silicibacter pomeroyi).